The primary structure comprises 224 residues: Proteasome subunit beta (224 aa).

A propeptide spans 1–6 (removed in mature form; by autocatalysis); that stretch reads MDVMKG. Residue Thr7 is the Nucleophile of the active site.

This sequence belongs to the peptidase T1B family. The 20S proteasome core is composed of 14 alpha and 14 beta subunits that assemble into four stacked heptameric rings, resulting in a barrel-shaped structure. The two inner rings, each composed of seven catalytic beta subunits, are sandwiched by two outer rings, each composed of seven alpha subunits. The catalytic chamber with the active sites is on the inside of the barrel. Has a gated structure, the ends of the cylinder being occluded by the N-termini of the alpha-subunits. Is capped at one or both ends by the proteasome regulatory ATPase, PAN.

It is found in the cytoplasm. The enzyme catalyses Cleavage of peptide bonds with very broad specificity.. Its activity is regulated as follows. The formation of the proteasomal ATPase PAN-20S proteasome complex, via the docking of the C-termini of PAN into the intersubunit pockets in the alpha-rings, triggers opening of the gate for substrate entry. Interconversion between the open-gate and close-gate conformations leads to a dynamic regulation of the 20S proteasome proteolysis activity. In terms of biological role, component of the proteasome core, a large protease complex with broad specificity involved in protein degradation. This chain is Proteasome subunit beta, found in Methanocaldococcus fervens (strain DSM 4213 / JCM 15782 / AG86) (Methanococcus fervens).